A 234-amino-acid polypeptide reads, in one-letter code: MRIIVADCCAEYTGRLSASLPLAKRVLLIKADNSLLIFSEIGSYKPLNWMLSPCTIKDITPQDADDDPATPTPEKIIRVQSTKTNDVLEVTLQHIYSDETHDLGTDPGLRKDGVEDHLQRYLAEQIERIGEGAKLVRREYPTAIGPVDIMAIDADGTHVAIEIKRHGGIDGVEQLTRYCELLNRDPLLAPVRGIFAAQTITPQAQVLAKDRGFDCLLLDYDDMKGTDDGALRLF.

Belongs to the NucS endonuclease family.

It localises to the cytoplasm. Functionally, cleaves both 3' and 5' ssDNA extremities of branched DNA structures. In Bifidobacterium animalis subsp. lactis (strain AD011), this protein is Endonuclease NucS.